The chain runs to 65 residues: Muscarinic toxin-like protein 3 (65 aa).

4 disulfides stabilise this stretch: cysteine 3–cysteine 24, cysteine 17–cysteine 41, cysteine 45–cysteine 57, and cysteine 58–cysteine 63.

In terms of assembly, homodimer; non-covalently linked. In terms of tissue distribution, expressed by the venom gland.

It is found in the secreted. Functionally, antagonist of muscle and neuronal nicotinic acetylcholine receptors (nAChR) with highest affinity for neuronal alpha-7/CHRNA7 nAChRs. The chain is Muscarinic toxin-like protein 3 from Naja kaouthia (Monocled cobra).